The chain runs to 106 residues: Toxin-like structure LSTX-D8 (106 aa).

Positions Met1–Ser20 are cleaved as a signal peptide. A propeptide spanning residues Glu21–Arg41 is cleaved from the precursor. Disulfide bonds link Cys45–Cys60, Cys52–Cys69, Cys59–Cys85, and Cys71–Cys83.

The protein belongs to the neurotoxin 19 (CSTX) family. 02 (D7) subfamily. In terms of tissue distribution, expressed by the venom gland.

Its subcellular location is the secreted. The sequence is that of Toxin-like structure LSTX-D8 from Lycosa singoriensis (Wolf spider).